A 210-amino-acid chain; its full sequence is Protein RCR2 (210 aa).

The helical transmembrane segment at 41–61 (WIFFIFFIVALLILLFSTAKV) threads the bilayer. The segment at 125–149 (PNGKTEYLAPPPLSEEQASSTDKDL) is disordered. The residue at position 161 (Ser161) is a Phosphoserine. Residues 175-199 (NNFVNGQSNRNEQHSPTVESSSFDV) are compositionally biased toward polar residues. The interval 175 to 210 (NNFVNGQSNRNEQHSPTVESSSFDVNNAPARAKVSK) is disordered. At Thr191 the chain carries Phosphothreonine.

The protein to yeast YBR005W.

The protein resides in the membrane. This is Protein RCR2 (RCR2) from Saccharomyces cerevisiae (strain ATCC 204508 / S288c) (Baker's yeast).